The chain runs to 374 residues: Chaperone protein DnaJ (374 aa).

Residues 5 to 70 form the J domain; it reads DYYEVLGVAK…QKRAAYDRYG (66 aa). A CR-type zinc finger spans residues 134–212; it reads GFDTEIRVPS…CDGVGRIRRN (79 aa). Zn(2+)-binding residues include Cys147, Cys150, Cys164, Cys167, Cys186, Cys189, Cys200, and Cys203. CXXCXGXG motif repeat units follow at residues 147–154, 164–171, 186–193, and 200–207; these read CDTCHGSG, CRTCGGSG, CPTCHGTG, and CPSCDGVG.

Belongs to the DnaJ family. In terms of assembly, homodimer. It depends on Zn(2+) as a cofactor.

Its subcellular location is the cytoplasm. In terms of biological role, participates actively in the response to hyperosmotic and heat shock by preventing the aggregation of stress-denatured proteins and by disaggregating proteins, also in an autonomous, DnaK-independent fashion. Unfolded proteins bind initially to DnaJ; upon interaction with the DnaJ-bound protein, DnaK hydrolyzes its bound ATP, resulting in the formation of a stable complex. GrpE releases ADP from DnaK; ATP binding to DnaK triggers the release of the substrate protein, thus completing the reaction cycle. Several rounds of ATP-dependent interactions between DnaJ, DnaK and GrpE are required for fully efficient folding. Also involved, together with DnaK and GrpE, in the DNA replication of plasmids through activation of initiation proteins. This is Chaperone protein DnaJ from Bordetella petrii (strain ATCC BAA-461 / DSM 12804 / CCUG 43448).